The following is a 342-amino-acid chain: Nucleoid-associated protein Sfri_2491 (342 aa).

This sequence belongs to the YejK family.

The protein localises to the cytoplasm. It is found in the nucleoid. The chain is Nucleoid-associated protein Sfri_2491 from Shewanella frigidimarina (strain NCIMB 400).